We begin with the raw amino-acid sequence, 49 residues long: Small, acid-soluble spore protein O (49 aa).

Residues 24–49 are disordered; the sequence is GYNEEFSNEPLTEAQRQNNKKRKKNQ.

It belongs to the SspO family.

Its subcellular location is the spore core. This Geobacillus kaustophilus (strain HTA426) protein is Small, acid-soluble spore protein O.